Here is a 444-residue protein sequence, read N- to C-terminus: 3-phosphoshikimate 1-carboxyvinyltransferase (444 aa).

Lysine 29, serine 30, and arginine 34 together coordinate 3-phosphoshikimate. Lysine 29 contributes to the phosphoenolpyruvate binding site. Residues glycine 103 and arginine 132 each contribute to the phosphoenolpyruvate site. 4 residues coordinate 3-phosphoshikimate: serine 177, glutamine 179, aspartate 329, and lysine 356. Glutamine 179 contributes to the phosphoenolpyruvate binding site. Aspartate 329 acts as the Proton acceptor in catalysis. 2 residues coordinate phosphoenolpyruvate: arginine 360 and arginine 402.

It belongs to the EPSP synthase family. In terms of assembly, monomer.

It is found in the cytoplasm. It carries out the reaction 3-phosphoshikimate + phosphoenolpyruvate = 5-O-(1-carboxyvinyl)-3-phosphoshikimate + phosphate. It functions in the pathway metabolic intermediate biosynthesis; chorismate biosynthesis; chorismate from D-erythrose 4-phosphate and phosphoenolpyruvate: step 6/7. Its function is as follows. Catalyzes the transfer of the enolpyruvyl moiety of phosphoenolpyruvate (PEP) to the 5-hydroxyl of shikimate-3-phosphate (S3P) to produce enolpyruvyl shikimate-3-phosphate and inorganic phosphate. This chain is 3-phosphoshikimate 1-carboxyvinyltransferase, found in Prochlorococcus marinus (strain NATL2A).